We begin with the raw amino-acid sequence, 284 residues long: Large ribosomal subunit protein uL2 (284 aa).

Disordered regions lie at residues glutamate 28–serine 50 and arginine 232–lysine 284. Residues arginine 36–phenylalanine 46 show a composition bias toward basic residues. Residues aspartate 240 to histidine 250 are compositionally biased toward basic and acidic residues. Basic residues predominate over residues lysine 264–lysine 284.

This sequence belongs to the universal ribosomal protein uL2 family. As to quaternary structure, part of the 50S ribosomal subunit. Forms a bridge to the 30S subunit in the 70S ribosome.

In terms of biological role, one of the primary rRNA binding proteins. Required for association of the 30S and 50S subunits to form the 70S ribosome, for tRNA binding and peptide bond formation. It has been suggested to have peptidyltransferase activity; this is somewhat controversial. Makes several contacts with the 16S rRNA in the 70S ribosome. This is Large ribosomal subunit protein uL2 from Chlamydia muridarum (strain MoPn / Nigg).